Reading from the N-terminus, the 438-residue chain is 3-phosphoshikimate 1-carboxyvinyltransferase (438 aa).

3-phosphoshikimate-binding residues include Lys-21, Ser-22, and Arg-26. Lys-21 serves as a coordination point for phosphoenolpyruvate. Phosphoenolpyruvate-binding residues include Gly-95 and Arg-123. 3-phosphoshikimate contacts are provided by Ser-167, Gln-169, Asp-315, and Lys-342. Gln-169 contacts phosphoenolpyruvate. The active-site Proton acceptor is the Asp-315. Phosphoenolpyruvate is bound by residues Arg-346 and Arg-387.

It belongs to the EPSP synthase family. As to quaternary structure, monomer.

The protein localises to the cytoplasm. The catalysed reaction is 3-phosphoshikimate + phosphoenolpyruvate = 5-O-(1-carboxyvinyl)-3-phosphoshikimate + phosphate. It functions in the pathway metabolic intermediate biosynthesis; chorismate biosynthesis; chorismate from D-erythrose 4-phosphate and phosphoenolpyruvate: step 6/7. Its function is as follows. Catalyzes the transfer of the enolpyruvyl moiety of phosphoenolpyruvate (PEP) to the 5-hydroxyl of shikimate-3-phosphate (S3P) to produce enolpyruvyl shikimate-3-phosphate and inorganic phosphate. This is 3-phosphoshikimate 1-carboxyvinyltransferase from Coxiella burnetii (strain CbuK_Q154) (Coxiella burnetii (strain Q154)).